The sequence spans 217 residues: Uridylate kinase (217 aa).

ATP is bound at residue 6-10 (KLSGR). UMP is bound at residue Gly-38. Residues Gly-39 and Arg-43 each contribute to the ATP site. Residues Asp-60 and 107–113 (FQPGQST) each bind UMP. Residues Asn-134, Tyr-139, and Asp-142 each contribute to the ATP site.

This sequence belongs to the UMP kinase family. Homohexamer.

Its subcellular location is the cytoplasm. The enzyme catalyses UMP + ATP = UDP + ADP. Its pathway is pyrimidine metabolism; CTP biosynthesis via de novo pathway; UDP from UMP (UMPK route): step 1/1. With respect to regulation, inhibited by UTP. Functionally, catalyzes the reversible phosphorylation of UMP to UDP. The polypeptide is Uridylate kinase (Pyrobaculum aerophilum (strain ATCC 51768 / DSM 7523 / JCM 9630 / CIP 104966 / NBRC 100827 / IM2)).